The sequence spans 223 residues: Phosphoribosylformylglycinamidine synthase subunit PurQ (223 aa).

Positions 3–223 constitute a Glutamine amidotransferase type-1 domain; it reads FAVLVFPGSN…MVKSWREQHV (221 aa). The active-site Nucleophile is cysteine 85. Catalysis depends on residues histidine 193 and glutamate 195.

As to quaternary structure, part of the FGAM synthase complex composed of 1 PurL, 1 PurQ and 2 PurS subunits.

The protein localises to the cytoplasm. The enzyme catalyses N(2)-formyl-N(1)-(5-phospho-beta-D-ribosyl)glycinamide + L-glutamine + ATP + H2O = 2-formamido-N(1)-(5-O-phospho-beta-D-ribosyl)acetamidine + L-glutamate + ADP + phosphate + H(+). The catalysed reaction is L-glutamine + H2O = L-glutamate + NH4(+). It functions in the pathway purine metabolism; IMP biosynthesis via de novo pathway; 5-amino-1-(5-phospho-D-ribosyl)imidazole from N(2)-formyl-N(1)-(5-phospho-D-ribosyl)glycinamide: step 1/2. In terms of biological role, part of the phosphoribosylformylglycinamidine synthase complex involved in the purines biosynthetic pathway. Catalyzes the ATP-dependent conversion of formylglycinamide ribonucleotide (FGAR) and glutamine to yield formylglycinamidine ribonucleotide (FGAM) and glutamate. The FGAM synthase complex is composed of three subunits. PurQ produces an ammonia molecule by converting glutamine to glutamate. PurL transfers the ammonia molecule to FGAR to form FGAM in an ATP-dependent manner. PurS interacts with PurQ and PurL and is thought to assist in the transfer of the ammonia molecule from PurQ to PurL. The polypeptide is Phosphoribosylformylglycinamidine synthase subunit PurQ (Staphylococcus aureus (strain USA300)).